Consider the following 197-residue polypeptide: Imidazoleglycerol-phosphate dehydratase (197 aa).

The protein belongs to the imidazoleglycerol-phosphate dehydratase family.

It is found in the cytoplasm. The catalysed reaction is D-erythro-1-(imidazol-4-yl)glycerol 3-phosphate = 3-(imidazol-4-yl)-2-oxopropyl phosphate + H2O. The protein operates within amino-acid biosynthesis; L-histidine biosynthesis; L-histidine from 5-phospho-alpha-D-ribose 1-diphosphate: step 6/9. The polypeptide is Imidazoleglycerol-phosphate dehydratase (Azotobacter vinelandii (strain DJ / ATCC BAA-1303)).